Reading from the N-terminus, the 61-residue chain is Photosystem II reaction center protein K (61 aa).

Residues 1 to 24 (MLNTFSLIGICLNSTLFSSSFFFG) constitute a propeptide that is removed on maturation. A helical membrane pass occupies residues 36–56 (IVDIMPVIPLFFFLLAFVWQA).

This sequence belongs to the PsbK family. As to quaternary structure, PSII is composed of 1 copy each of membrane proteins PsbA, PsbB, PsbC, PsbD, PsbE, PsbF, PsbH, PsbI, PsbJ, PsbK, PsbL, PsbM, PsbT, PsbX, PsbY, PsbZ, Psb30/Ycf12, at least 3 peripheral proteins of the oxygen-evolving complex and a large number of cofactors. It forms dimeric complexes.

The protein resides in the plastid. It is found in the chloroplast thylakoid membrane. Its function is as follows. One of the components of the core complex of photosystem II (PSII). PSII is a light-driven water:plastoquinone oxidoreductase that uses light energy to abstract electrons from H(2)O, generating O(2) and a proton gradient subsequently used for ATP formation. It consists of a core antenna complex that captures photons, and an electron transfer chain that converts photonic excitation into a charge separation. In Nicotiana tomentosiformis (Tobacco), this protein is Photosystem II reaction center protein K.